Here is a 761-residue protein sequence, read N- to C-terminus: MALARCVLAVILGVLSEVARADPVLHSPLHRPHPSPPRSQHAHYLPSSRRPPRTPRFPLPPRAPAAQRPQLLSTRHTPPTISRRCGAGEPWGNATNLGVPCLHWDEVPPFLERSPPASWAELRGQPHNFCRSPGGAGRPWCFYRNAQGKVDWGYCDCGQGPALPVIRLVGGKSGHEGRVELYHAGQWGTICDDQWDDADAEVICRQLGLSGIAKAWHQAHFGEGSGPILLDEVRCTGNELSIEQCPKSSWGEHNCGHKEDAGVSCAPLTDGVIRLSGGKSVHEGRLEVYYRGQWGTVCDDGWTEMNTYVACRLLGFKYGKQSSVNHFEGSSRPIWLDDVSCSGKEASFIQCSRRQWGRHDCSHREDVGLTCYPDSDGHRLSPGFPIRLMDGENKREGRVEVFVSGQWGTICDDGWTDKHAAVICRQLGYKGPARARTMAYFGEGKGPIHMDNVKCTGNEKALADCVKQDIGRHNCRHSEDAGVICDYYEKKTSGHGNKETLSSGCGLRLLHRRQKRIIGGNNSLRGAWPWQASLRLKSTHGDGRLLCGATLLSSCWVLTAAHCFKRYGNNSRSYAVRVGDYHTLVPEEFEQEIGVQQIVIHRNYRPDSSDYDIALVRLQGSGEQCARLSTHVLPACLPLWRERPQKTASNCHITGWGDTGRAYSRTLQQAAVPLLPKRFCKERYKGLFTGRMLCAGNLQEDNRVDSCQGDSGGPLMCEKPDETWVVYGVTSWGYGCGIKDTPGVYTRVPAFVPWIKSVTSL.

A signal peptide spans 1-21 (MALARCVLAVILGVLSEVARA). A disordered region spans residues 26 to 88 (HSPLHRPHPS…PTISRRCGAG (63 aa)). Residues 54–63 (TPRFPLPPRA) are compositionally biased toward pro residues. Residues 85–157 (CGAGEPWGNA…GKVDWGYCDC (73 aa)) form the Kringle domain. Disulfide bonds link Cys-85/Cys-157, Cys-101/Cys-141, Cys-130/Cys-155, Cys-191/Cys-255, Cys-204/Cys-265, Cys-235/Cys-245, Cys-298/Cys-361, Cys-311/Cys-371, Cys-341/Cys-351, Cys-411/Cys-475, Cys-424/Cys-485, Cys-455/Cys-465, Cys-505/Cys-636, Cys-547/Cys-563, Cys-651/Cys-717, Cys-680/Cys-694, and Cys-707/Cys-736. The N-linked (GlcNAc...) asparagine glycan is linked to Asn-93. SRCR domains lie at 166–267 (IRLV…SCAP), 273–373 (IRLS…TCYP), and 386–487 (IRLM…ICDY). The zymogen activation region stretch occupies residues 505 to 516 (CGLRLLHRRQKR). One can recognise a Peptidase S1 domain in the interval 517–760 (IIGGNNSLRG…FVPWIKSVTS (244 aa)). A glycan (N-linked (GlcNAc...) asparagine) is linked at Asn-521. Residue His-562 is the Charge relay system of the active site. N-linked (GlcNAc...) asparagine glycosylation occurs at Asn-569. Asp-612 functions as the Charge relay system in the catalytic mechanism. The active-site Charge relay system is Ser-711.

This sequence belongs to the peptidase S1 family.

The protein resides in the secreted. Plays a role in neuronal plasticity and the proteolytic action may subserve structural reorganizations associated with learning and memory operations. The chain is Neurotrypsin (Prss12) from Rattus norvegicus (Rat).